We begin with the raw amino-acid sequence, 151 residues long: Group 10 secretory phospholipase A2 (151 aa).

Residues 1–17 (MLLLLLLLLLGPGSCLS) form the signal peptide. A propeptide spanning residues 18–28 (EATRRSHVYKR) is cleaved from the precursor. Disulfide bonds link Cys-39–Cys-97, Cys-53–Cys-143, Cys-55–Cys-71, Cys-70–Cys-125, Cys-76–Cys-150, Cys-77–Cys-118, Cys-86–Cys-111, and Cys-104–Cys-116. Positions 54, 56, and 58 each coordinate Ca(2+). The active site involves His-74. Asp-75 serves as a coordination point for Ca(2+). Residue Asp-119 is part of the active site.

Belongs to the phospholipase A2 family. Interacts with PLA2R1; this interaction mediates PLA2G10 clearance and inactivation. It depends on Ca(2+) as a cofactor.

It is found in the secreted. Its subcellular location is the lysosome. The protein resides in the cytoplasmic vesicle. The protein localises to the secretory vesicle. It localises to the acrosome. The enzyme catalyses a 1,2-diacyl-sn-glycero-3-phosphocholine + H2O = a 1-acyl-sn-glycero-3-phosphocholine + a fatty acid + H(+). The catalysed reaction is 1-hexadecanoyl-2-(9Z-octadecenoyl)-sn-glycero-3-phosphocholine + H2O = 1-hexadecanoyl-sn-glycero-3-phosphocholine + (9Z)-octadecenoate + H(+). It catalyses the reaction 1-octadecanoyl-2-(5Z,8Z,11Z,14Z-eicosatetraenoyl)-sn-glycero-3-phosphocholine + H2O = 1-octadecanoyl-sn-glycero-3-phosphocholine + (5Z,8Z,11Z,14Z)-eicosatetraenoate + H(+). It carries out the reaction 1,2-dihexadecanoyl-sn-glycero-3-phosphocholine + H2O = 1-hexadecanoyl-sn-glycero-3-phosphocholine + hexadecanoate + H(+). The enzyme catalyses 1-hexadecanoyl-2-(9Z-octadecenoyl)-sn-glycero-3-phosphoglycerol + H2O = 1-hexadecanoyl-sn-glycero-3-phosphoglycerol + (9Z)-octadecenoate + H(+). The catalysed reaction is 1,2-dihexadecanoyl-sn-glycero-3-phospho-(1'-sn-glycerol) + H2O = 1-hexadecanoyl-sn-glycero-3-phospho-(1'-sn-glycerol) + hexadecanoate + H(+). It catalyses the reaction 1-hexadecanoyl-2-(9Z-octadecenoyl)-sn-glycero-3-phospho-L-serine + H2O = 1-hexadecanoyl-sn-glycero-3-phospho-L-serine + (9Z)-octadecenoate + H(+). It carries out the reaction 1-hexadecanoyl-2-(9Z,12Z-octadecadienoyl)-sn-glycero-3-phosphoethanolamine + H2O = 1-hexadecanoyl-sn-glycero-3-phosphoethanolamine + (9Z,12Z)-octadecadienoate + H(+). The enzyme catalyses 1-hexadecanoyl-2-(9Z-octadecenoyl)-sn-glycero-3-phosphate + H2O = 1-hexadecanoyl-sn-glycero-3-phosphate + (9Z)-octadecenoate + H(+). The catalysed reaction is 1-O-hexadecyl-2-acetyl-sn-glycero-3-phosphocholine + H2O = 1-O-hexadecyl-sn-glycero-3-phosphocholine + acetate + H(+). In terms of biological role, secretory calcium-dependent phospholipase A2 that primarily targets extracellular phospholipids. Hydrolyzes the ester bond of the fatty acyl group attached at sn-2 position of phospholipids with preference for phosphatidylcholines and phosphatidylglycerols over phosphatidylethanolamines. Preferentially releases sn-2 omega-6 and omega-3 polyunsaturated fatty acyl (PUFA) chains over saturated fatty acyls. Contributes to phospholipid remodeling of very low-density lipoprotein (VLDL), low-density lipoprotein (LDL) and high-density lipoprotein (HDL) particles. Hydrolyzes LDL phospholipids releasing unsaturated fatty acids that regulate macrophage differentiation toward foam cells. Efficiently hydrolyzes and inactivates platelet activating factor (PAF), a potent lipid mediator present in oxidized LDL. May act in an autocrine and paracrine manner. Secreted by lung epithelium, targets membrane phospholipids of infiltrating eosinophils, releasing arachidonate and boosting eicosanoid and cysteinyl leukotriene synthesis involved in airway inflammatory response. Secreted by gut epithelium, hydrolyzes dietary and biliary phosphatidylcholines in the gastrointestinal lumen. Plays a stem cell regulator role in colon epithelium. Within intracellular compartment, mediates Paneth-like cell differentiation and its stem cell supporting functions by inhibiting the Wnt signaling pathway in intestinal stem cell (ISC). Secreted in the intestinal lumen upon inflammation, acts in an autocrine way and promotes prostaglandin E2 synthesis that stimulates Wnt signaling pathway in ISCs and tissue regeneration. May participate in hair follicle morphogenesis by regulating phosphatidylethanolamines metabolism at the outermost epithelial layer and facilitating melanin synthesis. By releasing lysophosphatidylcholines (LPCs) at sperm acrosome, controls sperm cell capacitation, acrosome reaction and overall fertility. May promote neurite outgrowth in neuron fibers involved in nociception. Contributes to lipid remodeling of cellular membranes and generation of lipid mediators involved in pathogen clearance. Cleaves sn-2 fatty acyl chains of phosphatidylglycerols and phosphatidylethanolamines, which are major components of membrane phospholipids in bacteria. Displays bactericidal activity against Gram-positive bacteria by directly hydrolyzing phospholipids of the bacterial membrane. In pulmonary epithelium, may contribute to host defense response against adenoviral infection. Prevents adenovirus entry into host cells by hydrolyzing host cell plasma membrane, releasing C16:0 LPCs that inhibit virus-mediated membrane fusion and viral infection. Likely prevents adenoviral entry into the endosomes of host cells. May play a role in maturation and activation of innate immune cells including macrophages, group 2 innate lymphoid cells and mast cells. The polypeptide is Group 10 secretory phospholipase A2 (Pla2g10) (Rattus norvegicus (Rat)).